Reading from the N-terminus, the 397-residue chain is CCA-adding enzyme (397 aa).

2 residues coordinate ATP: glycine 26 and arginine 29. Positions 26 and 29 each coordinate CTP. Aspartate 39 and aspartate 41 together coordinate Mg(2+). ATP-binding residues include arginine 110, aspartate 153, arginine 156, arginine 159, and arginine 162. CTP is bound by residues arginine 110, aspartate 153, arginine 156, arginine 159, and arginine 162.

Belongs to the tRNA nucleotidyltransferase/poly(A) polymerase family. Bacterial CCA-adding enzyme type 3 subfamily. In terms of assembly, homodimer. Mg(2+) serves as cofactor.

It catalyses the reaction a tRNA precursor + 2 CTP + ATP = a tRNA with a 3' CCA end + 3 diphosphate. It carries out the reaction a tRNA with a 3' CCA end + 2 CTP + ATP = a tRNA with a 3' CCACCA end + 3 diphosphate. Its function is as follows. Catalyzes the addition and repair of the essential 3'-terminal CCA sequence in tRNAs without using a nucleic acid template. Adds these three nucleotides in the order of C, C, and A to the tRNA nucleotide-73, using CTP and ATP as substrates and producing inorganic pyrophosphate. tRNA 3'-terminal CCA addition is required both for tRNA processing and repair. Also involved in tRNA surveillance by mediating tandem CCA addition to generate a CCACCA at the 3' terminus of unstable tRNAs. While stable tRNAs receive only 3'-terminal CCA, unstable tRNAs are marked with CCACCA and rapidly degraded. This chain is CCA-adding enzyme, found in Bacillus cereus (strain B4264).